The following is a 538-amino-acid chain: C-22 sterol desaturase ERG5 (538 aa).

Residues Leu-46–Ile-66 form a helical membrane-spanning segment. Residues Lys-164 and Lys-198 each participate in a glycyl lysine isopeptide (Lys-Gly) (interchain with G-Cter in ubiquitin) cross-link. Residue Cys-476 coordinates heme.

Belongs to the cytochrome P450 family. As to quaternary structure, interacts with ERG28. Heme serves as cofactor.

It is found in the endoplasmic reticulum membrane. The catalysed reaction is 5-dehydroepisterol + NADPH + O2 + H(+) = ergosta-5,7,22,24(28)-tetraen-3beta-ol + NADP(+) + 2 H2O. The protein operates within steroid metabolism; ergosterol biosynthesis; ergosterol from zymosterol: step 4/5. C-22 sterol desaturase; part of the third module of ergosterol biosynthesis pathway that includes the late steps of the pathway. ERG5 converts 5-dehydroepisterol into ergosta-5,7,22,24(28)-tetraen-3beta-ol by forming the C-22(23) double bond in the sterol side chain. The third module or late pathway involves the ergosterol synthesis itself through consecutive reactions that mainly occur in the endoplasmic reticulum (ER) membrane. Firstly, the squalene synthase ERG9 catalyzes the condensation of 2 farnesyl pyrophosphate moieties to form squalene, which is the precursor of all steroids. Squalene synthase is crucial for balancing the incorporation of farnesyl diphosphate (FPP) into sterol and nonsterol isoprene synthesis. Secondly, the squalene epoxidase ERG1 catalyzes the stereospecific oxidation of squalene to (S)-2,3-epoxysqualene, which is considered to be a rate-limiting enzyme in steroid biosynthesis. Then, the lanosterol synthase ERG7 catalyzes the cyclization of (S)-2,3 oxidosqualene to lanosterol, a reaction that forms the sterol core. In the next steps, lanosterol is transformed to zymosterol through a complex process involving various demethylation, reduction and desaturation reactions. The lanosterol 14-alpha-demethylase ERG11 (also known as CYP51) catalyzes C14-demethylation of lanosterol to produce 4,4'-dimethyl cholesta-8,14,24-triene-3-beta-ol, which is critical for ergosterol biosynthesis. The C-14 reductase ERG24 reduces the C14=C15 double bond of 4,4-dimethyl-cholesta-8,14,24-trienol to produce 4,4-dimethyl-cholesta-8,24-dienol. 4,4-dimethyl-cholesta-8,24-dienol is substrate of the C-4 demethylation complex ERG25-ERG26-ERG27 in which ERG25 catalyzes the three-step monooxygenation required for the demethylation of 4,4-dimethyl and 4alpha-methylsterols, ERG26 catalyzes the oxidative decarboxylation that results in a reduction of the 3-beta-hydroxy group at the C-3 carbon to an oxo group, and ERG27 is responsible for the reduction of the keto group on the C-3. ERG28 has a role as a scaffold to help anchor ERG25, ERG26 and ERG27 to the endoplasmic reticulum and ERG29 regulates the activity of the iron-containing C4-methylsterol oxidase ERG25. Then, the sterol 24-C-methyltransferase ERG6 catalyzes the methyl transfer from S-adenosyl-methionine to the C-24 of zymosterol to form fecosterol. The C-8 sterol isomerase ERG2 catalyzes the reaction which results in unsaturation at C-7 in the B ring of sterols and thus converts fecosterol to episterol. The sterol-C5-desaturase ERG3 then catalyzes the introduction of a C-5 double bond in the B ring to produce 5-dehydroepisterol. The C-22 sterol desaturase ERG5 further converts 5-dehydroepisterol into ergosta-5,7,22,24(28)-tetraen-3beta-ol by forming the C-22(23) double bond in the sterol side chain. Finally, ergosta-5,7,22,24(28)-tetraen-3beta-ol is substrate of the C-24(28) sterol reductase ERG4 to produce ergosterol. The polypeptide is C-22 sterol desaturase ERG5 (Saccharomyces cerevisiae (strain ATCC 204508 / S288c) (Baker's yeast)).